A 97-amino-acid chain; its full sequence is Exodeoxyribonuclease 7 small subunit (97 aa).

The tract at residues 1–21 is disordered; sequence MAKTATPGACASDPGSGPLPE.

Belongs to the XseB family. Heterooligomer composed of large and small subunits.

The protein localises to the cytoplasm. The enzyme catalyses Exonucleolytic cleavage in either 5'- to 3'- or 3'- to 5'-direction to yield nucleoside 5'-phosphates.. Functionally, bidirectionally degrades single-stranded DNA into large acid-insoluble oligonucleotides, which are then degraded further into small acid-soluble oligonucleotides. The sequence is that of Exodeoxyribonuclease 7 small subunit from Burkholderia mallei (strain NCTC 10247).